The chain runs to 768 residues: GPI inositol-deacylase (768 aa).

Residues 35 to 55 traverse the membrane as a helical segment; that stretch reads FLSRLFCALAVLFSYSIYQSF. S206 is an active-site residue. Residues N291, N336, N374, and N448 are each glycosylated (N-linked (GlcNAc...) asparagine). 6 helical membrane-spanning segments follow: residues 604–624, 642–662, 663–683, 700–720, 725–745, and 748–768; these read MPIC…LPDF, LVGI…FHLI, STCA…VAIW, NFYY…GGTI, VCLK…FSVG, and WTWI…ASII.

It belongs to the GPI inositol-deacylase family.

Its subcellular location is the endoplasmic reticulum membrane. Involved in inositol deacylation of GPI-anchored proteins which plays important roles in the quality control and ER-associated degradation of GPI-anchored proteins. The polypeptide is GPI inositol-deacylase (BST1) (Cryptococcus neoformans var. neoformans serotype D (strain B-3501A) (Filobasidiella neoformans)).